The primary structure comprises 567 residues: Oxygen-dependent choline dehydrogenase (567 aa).

FAD is bound at residue 6-35; the sequence is DYIIVGAGSAGNTLATRLTEDEGVTVLLLE. The active-site Proton acceptor is the His475.

Belongs to the GMC oxidoreductase family. The cofactor is FAD.

The catalysed reaction is choline + A = betaine aldehyde + AH2. The enzyme catalyses betaine aldehyde + NAD(+) + H2O = glycine betaine + NADH + 2 H(+). It participates in amine and polyamine biosynthesis; betaine biosynthesis via choline pathway; betaine aldehyde from choline (cytochrome c reductase route): step 1/1. Functionally, involved in the biosynthesis of the osmoprotectant glycine betaine. Catalyzes the oxidation of choline to betaine aldehyde and betaine aldehyde to glycine betaine at the same rate. The protein is Oxygen-dependent choline dehydrogenase of Pseudomonas fluorescens (strain Pf0-1).